We begin with the raw amino-acid sequence, 345 residues long: Dihydroorotase (345 aa).

Residues His13 and His15 each coordinate Zn(2+). Substrate contacts are provided by residues 15–17 (HFR) and Asn41. 3 residues coordinate Zn(2+): Lys98, His135, and His173. An N6-carboxylysine modification is found at Lys98. Residue His135 participates in substrate binding. A substrate-binding site is contributed by Leu218. Asp246 is a Zn(2+) binding site. Asp246 is an active-site residue. Substrate-binding residues include His250 and Ala262.

Belongs to the metallo-dependent hydrolases superfamily. DHOase family. Class II DHOase subfamily. Homodimer. The cofactor is Zn(2+).

The catalysed reaction is (S)-dihydroorotate + H2O = N-carbamoyl-L-aspartate + H(+). It functions in the pathway pyrimidine metabolism; UMP biosynthesis via de novo pathway; (S)-dihydroorotate from bicarbonate: step 3/3. Its function is as follows. Catalyzes the reversible cyclization of carbamoyl aspartate to dihydroorotate. This is Dihydroorotase from Shewanella piezotolerans (strain WP3 / JCM 13877).